Reading from the N-terminus, the 122-residue chain is Large ribosomal subunit protein uL18 (122 aa).

Residues 1 to 20 (MLKKVSKNTNRQGRHQRVRN) show a composition bias toward basic residues. The interval 1–22 (MLKKVSKNTNRQGRHQRVRNKI) is disordered.

This sequence belongs to the universal ribosomal protein uL18 family. As to quaternary structure, part of the 50S ribosomal subunit; part of the 5S rRNA/L5/L18/L25 subcomplex. Contacts the 5S and 23S rRNAs.

This is one of the proteins that bind and probably mediate the attachment of the 5S RNA into the large ribosomal subunit, where it forms part of the central protuberance. This chain is Large ribosomal subunit protein uL18, found in Alkaliphilus metalliredigens (strain QYMF).